Here is an 87-residue protein sequence, read N- to C-terminus: Cytochrome c oxidase assembly factor 3, mitochondrial (87 aa).

Residues 47–69 (NNLLTAGALGVSVLAIYGYSIFS) form a helical membrane-spanning segment.

Belongs to the COA3 family.

It localises to the mitochondrion membrane. Its function is as follows. Plays a critical role in the biogenesis and activity of cytochrome c oxidase (COX) (complex IV). In Drosophila melanogaster (Fruit fly), this protein is Cytochrome c oxidase assembly factor 3, mitochondrial (Ccdc56).